The sequence spans 60 residues: Mastoparan-VB2 (60 aa).

The N-terminal stretch at 1-27 (MKNTILLLFTAFIFLMGFFGMSADALA) is a signal peptide. 4 AXPX repeats span residues 27–30 (ADPK), 31–34 (ADPL), 35–38 (AGPF), and 41–44 (ADPD). Residues 28 to 45 (DPKADPLAGPFPDADPDP) constitute a propeptide that is removed on maturation. At L59 the chain carries Leucine amide.

It belongs to the MCD family. Mastoparan subfamily. Expressed by the venom gland.

It localises to the secreted. Its subcellular location is the target cell membrane. Its function is as follows. Antimicrobial peptide. Shows activity against both Gram-positive and -negative bacteria, as well against fungi. Also promotes moderate mast cell degranulation. Does not show hemolytic activity on rabbit and human erythrocytes. Its mast cell degranulation activity may be related to the activation of G-protein coupled receptors in mast cells as well as interaction with other proteins located in cell endosomal membranes in the mast cells. The chain is Mastoparan-VB2 from Vespa bicolor (Black shield wasp).